A 42-amino-acid chain; its full sequence is Cytochrome b559 subunit beta (42 aa).

The helical transmembrane segment at 17-33 (WLSIHALAVPTVFFLGA) threads the bilayer. His-21 lines the heme pocket.

It belongs to the PsbE/PsbF family. As to quaternary structure, heterodimer of an alpha subunit and a beta subunit. PSII is composed of 1 copy each of membrane proteins PsbA, PsbB, PsbC, PsbD, PsbE, PsbF, PsbH, PsbI, PsbJ, PsbK, PsbL, PsbM, PsbT, PsbX, PsbY, PsbZ, Psb30/Ycf12, at least 3 peripheral proteins of the oxygen-evolving complex and a large number of cofactors. It forms dimeric complexes. Heme b serves as cofactor.

The protein localises to the plastid. It is found in the chloroplast thylakoid membrane. Its function is as follows. This b-type cytochrome is tightly associated with the reaction center of photosystem II (PSII). PSII is a light-driven water:plastoquinone oxidoreductase that uses light energy to abstract electrons from H(2)O, generating O(2) and a proton gradient subsequently used for ATP formation. It consists of a core antenna complex that captures photons, and an electron transfer chain that converts photonic excitation into a charge separation. This chain is Cytochrome b559 subunit beta, found in Tupiella akineta (Green alga).